The following is a 49-amino-acid chain: L-amino-acid oxidase (49 aa).

43–44 contacts FAD; sequence MS.

The protein belongs to the flavin monoamine oxidase family. FIG1 subfamily. Homodimer; non-covalently linked. Requires FAD as cofactor. N-glycosylated. In terms of tissue distribution, expressed by the venom gland.

The protein localises to the secreted. It carries out the reaction an L-alpha-amino acid + O2 + H2O = a 2-oxocarboxylate + H2O2 + NH4(+). The enzyme catalyses L-leucine + O2 + H2O = 4-methyl-2-oxopentanoate + H2O2 + NH4(+). Its function is as follows. Catalyzes an oxidative deamination of predominantly hydrophobic and aromatic L-amino acids, thus producing hydrogen peroxide that may contribute to the diverse toxic effects of this enzyme. Shows activity on L-Leu. Exhibits diverse biological activities, such as hemorrhage, hemolysis, edema, antibacterial and antiparasitic activities, as well as regulation of platelet aggregation. Its effect on platelets is controversial, since it either induces aggregation or inhibits agonist-induced aggregation. These different effects are probably due to different experimental conditions. In addition, this protein induces apoptosis and necrosis and has inhibitory effects on rat kidney function (decrease of blood flow and glomerular filtration). The chain is L-amino-acid oxidase from Bothrops insularis (Golden lancehead).